A 33-amino-acid chain; its full sequence is Photosystem II reaction center protein Psb30 (33 aa).

Residues Ile-5 to Leu-25 form a helical membrane-spanning segment.

The protein belongs to the Psb30/Ycf12 family. In terms of assembly, PSII is composed of 1 copy each of membrane proteins PsbA, PsbB, PsbC, PsbD, PsbE, PsbF, PsbH, PsbI, PsbJ, PsbK, PsbL, PsbM, PsbT, PsbX, PsbY, PsbZ, Psb30/Ycf12, peripheral proteins of the oxygen-evolving complex and a large number of cofactors. It forms dimeric complexes.

It localises to the plastid. The protein localises to the chloroplast thylakoid membrane. A core subunit of photosystem II (PSII), probably helps stabilize the reaction center. This chain is Photosystem II reaction center protein Psb30, found in Chaetosphaeridium globosum (Charophycean green alga).